The primary structure comprises 1183 residues: Translation initiation factor IF-2 (1183 aa).

2 disordered regions span residues 55–512 (KSKT…KVHI) and 538–574 (ASLA…RQRR). A compositionally biased stretch (basic and acidic residues) spans 83–99 (TQKDQKTEPKKKNHDQT). Composition is skewed to polar residues over residues 100–143 (ELSQ…QITA) and 165–177 (KPLT…IPQS). Over residues 220–229 (PKIDIQDKKP) the composition is skewed to basic and acidic residues. Polar residues predominate over residues 231–252 (QPNNQKAKTRINQGEISPQKVG). Over residues 253 to 267 (QGNIQKIKSQNKQNQ) the composition is skewed to low complexity. A compositionally biased stretch (basic and acidic residues) spans 288–304 (IRREKPVNKPHTNEVRN). 2 stretches are compositionally biased toward polar residues: residues 324–349 (QGLS…NRQG) and 357–367 (NRTTQGQNRPG). The segment covering 485–499 (GRPDWDDSAKLDALR) has biased composition (basic and acidic residues). Basic residues-rich tracts occupy residues 544–553 (SKPKVGKRNN) and 560–574 (LKKR…RQRR). The tr-type G domain maps to 675–847 (RRPPVVTVMG…VLLVTEVEDL (173 aa)). The G1 stretch occupies residues 684–691 (GHVDHGKT). Residue 684-691 (GHVDHGKT) coordinates GTP. The segment at 709–713 (GITQH) is G2. The interval 734-737 (DTPG) is G3. GTP contacts are provided by residues 734–738 (DTPGH) and 788–791 (NKID). The interval 788–791 (NKID) is G4. The G5 stretch occupies residues 824–826 (SAI).

Belongs to the TRAFAC class translation factor GTPase superfamily. Classic translation factor GTPase family. IF-2 subfamily.

It localises to the cytoplasm. In terms of biological role, one of the essential components for the initiation of protein synthesis. Protects formylmethionyl-tRNA from spontaneous hydrolysis and promotes its binding to the 30S ribosomal subunits. Also involved in the hydrolysis of GTP during the formation of the 70S ribosomal complex. This is Translation initiation factor IF-2 from Prochlorococcus marinus (strain NATL1A).